The primary structure comprises 118 residues: UPF0102 protein Franean1_1156 (118 aa).

Belongs to the UPF0102 family.

The protein is UPF0102 protein Franean1_1156 of Parafrankia sp. (strain EAN1pec).